The sequence spans 29 residues: GLPVCGETCFGGTCNTPGCTCSYPICTRN.

The segment at residues 1-29 is a cross-link (cyclopeptide (Gly-Asn)); sequence GLPVCGETCFGGTCNTPGCTCSYPICTRN. Disulfide bonds link C5–C19, C9–C21, and C14–C26.

In terms of processing, this is a cyclic peptide.

Probably participates in a plant defense mechanism. This is Cyclotide vibi-B from Viola biflora (Yellow wood violet).